The primary structure comprises 377 residues: Histone deacetylase 8 (377 aa).

A histone deacetylase region spans residues 14 to 324; sequence LPPVYIYSPE…WTYLTGVILG (311 aa). At Ser-39 the chain carries Phosphoserine. Asp-101 is a substrate binding site. Catalysis depends on His-143, which acts as the Proton acceptor. Gly-151 is a substrate binding site. Asp-178, His-180, and Asp-267 together coordinate a divalent metal cation. Tyr-306 provides a ligand contact to substrate.

Belongs to the histone deacetylase family. HD type 1 subfamily. In terms of assembly, interacts with CBFA2T3. Interacts with phosphorylated SMG5/EST1B; this interaction protects SMG5 from ubiquitin-mediated degradation. Associates with alpha-SMA (smooth muscle alpha-actin). It depends on a divalent metal cation as a cofactor. Post-translationally, phosphorylated by PKA on serine 39. Phosphorylation reduces deacetylase activity observed preferentially on histones H3 and H4.

It is found in the nucleus. The protein localises to the chromosome. It localises to the cytoplasm. The enzyme catalyses N(6)-acetyl-L-lysyl-[histone] + H2O = L-lysyl-[histone] + acetate. It carries out the reaction N(6)-acetyl-L-lysyl-[protein] + H2O = L-lysyl-[protein] + acetate. It catalyses the reaction N(6)-(2E)-butenoyl-L-lysyl-[protein] + H2O = (2E)-2-butenoate + L-lysyl-[protein]. Its activity is inhibited by trichostatin A (TSA) and butyrate, 2 well known histone deacetylase inhibitors. histone deacetylase inhibitor. Functionally, histone deacetylase that catalyzes the deacetylation of lysine residues on the N-terminal part of the core histones (H2A, H2B, H3 and H4). Histone deacetylation gives a tag for epigenetic repression and plays an important role in transcriptional regulation, cell cycle progression and developmental events. Histone deacetylases act via the formation of large multiprotein complexes. Also involved in the deacetylation of cohesin complex protein SMC3 regulating release of cohesin complexes from chromatin. May play a role in smooth muscle cell contractility. In addition to protein deacetylase activity, also has protein-lysine deacylase activity: acts as a protein decrotonylase by mediating decrotonylation ((2E)-butenoyl) of histones. The polypeptide is Histone deacetylase 8 (Hdac8) (Mus musculus (Mouse)).